The chain runs to 346 residues: Glucose-6-phosphatase 3 (346 aa).

Topologically, residues 1–25 (MESTLSAGIMMAEALQNQLPGLENM) are lumenal. The helical transmembrane segment at 26-46 (WLWVTFLADPKNLFQFYFPAV) threads the bilayer. The Cytoplasmic portion of the chain corresponds to 47-56 (YYASRRLGIS). Residues 57–77 (LFWIAFITEWLNLVFKWFLFG) traverse the membrane as a helical segment. The Lumenal segment spans residues 78-115 (DRPFWWVHESGYSAQTPVQIHQFPSSCETGPGSPSGHC). R79 lines the substrate pocket. H114 serves as the catalytic Proton donor. The helical transmembrane segment at 116 to 135 (MITGAALWPVMIAISSQVAS) threads the bilayer. Over 136–140 (QTRSP) the chain is Cytoplasmic. A helical membrane pass occupies residues 141–162 (WVRVIPGLAYCTFLLAVGLSRV). R161 is a binding site for substrate. At 163–167 (FLLAH) the chain is on the lumenal side. H167 acts as the Nucleophile in catalysis. The helical transmembrane segment at 168 to 186 (FPHQVLAGLLAGVILGWLL) threads the bilayer. Over 187-197 (SPRVPMERELS) the chain is Cytoplasmic. The helical transmembrane segment at 198–218 (FYGLTALTLMLGASLMYWTLF) threads the bilayer. At 219 to 254 (TLGLDLSWSINLASKWCDRPEWVLVDSRPFASLSRD) the chain is on the lumenal side. The helical transmembrane segment at 255–273 (SGSALGLGIALHTPCYAQI) threads the bilayer. Residues 274 to 283 (RRVHLGNGQK) are Cytoplasmic-facing. A helical membrane pass occupies residues 284–304 (IACFVLAMGLLVFLEWLGHPP). Over 305–307 (QIS) the chain is Lumenal. A helical membrane pass occupies residues 308-328 (LFYIFNFLKFTLWPCLVVALV). The Cytoplasmic segment spans residues 329 to 346 (PWMVHTLSAQEAPPIRSS).

The protein belongs to the glucose-6-phosphatase family. As to expression, expressed in liver and kidney. It is the major glucose-6-phosphatase expressed in the small intestine.

It localises to the endoplasmic reticulum membrane. It catalyses the reaction D-glucose 6-phosphate + H2O = D-glucose + phosphate. Its pathway is carbohydrate biosynthesis; gluconeogenesis. Its activity is regulated as follows. Inhibited by vanadate. Functionally, hydrolyzes glucose-6-phosphate to glucose in the endoplasmic reticulum. May form with the glucose-6-phosphate transporter (SLC37A4/G6PT) a ubiquitously expressed complex responsible for glucose production through glycogenolysis and gluconeogenesis. Probably required for normal neutrophil function. This chain is Glucose-6-phosphatase 3 (G6pc3), found in Rattus norvegicus (Rat).